Consider the following 75-residue polypeptide: uncharacterized protein (75 aa).

Residues 44 to 64 traverse the membrane as a helical segment; it reads IINMIVIWAALIALFVKLYIL.

The protein localises to the host membrane. This is an uncharacterized protein from Ostreid herpesvirus 1 (isolate France) (OsHV-1).